We begin with the raw amino-acid sequence, 312 residues long: Malate dehydrogenase (312 aa).

NAD(+) is bound by residues 7 to 13 and D34; that span reads GAAGGIG. R81 and R87 together coordinate substrate. Residues N94 and 117 to 119 contribute to the NAD(+) site; that span reads ITN. N119 and R153 together coordinate substrate. Residue H177 is the Proton acceptor of the active site. NAD(+) is bound at residue M227.

Belongs to the LDH/MDH superfamily. MDH type 1 family. Homodimer.

It carries out the reaction (S)-malate + NAD(+) = oxaloacetate + NADH + H(+). Functionally, catalyzes the reversible oxidation of malate to oxaloacetate. In Escherichia coli O7:K1 (strain IAI39 / ExPEC), this protein is Malate dehydrogenase.